Consider the following 992-residue polypeptide: RNA-binding motif protein, X-linked-like-3 (992 aa).

In terms of domain architecture, RRM spans 8–86 (EKLFVGGLNL…KAIMVAQTIK (79 aa)). Disordered stretches follow at residues 91–130 (SSRW…PDDG), 144–169 (APMP…DPGD), 188–207 (PDYC…GRDH), 278–385 (DHLP…DSSS), 397–511 (EEYQ…HRYR), 562–588 (SLDA…SHRY), and 644–992 (NSGG…QSRY). A compositionally biased stretch (low complexity) spans 284–296 (YSGGRSSSSNSYS). Over residues 297–316 (RSDRYGEEGCYEEYRGRSPD) the composition is skewed to basic and acidic residues. Positions 318 to 334 (HSGGRNSSSNSYGQSHH) are enriched in low complexity. The segment covering 335–371 (YGGEGRYEEYRGRYEEYRGRSHEARSGGRSTDAHSGG) has biased composition (basic and acidic residues). Low complexity predominate over residues 454–471 (THSGGRSSSSNSYGQSHR). Over residues 472–488 (YGGEGHYEYRGRSHDAH) the composition is skewed to basic and acidic residues. Composition is skewed to polar residues over residues 564–574 (DANSGGRSPNA), 644–664 (NSGG…SQSH), and 752–774 (DANS…SNSY). Basic and acidic residues predominate over residues 785–798 (HYEEYRGRSHDTHS). Residues 818–828 (GRNSFSNSYGQ) show a composition bias toward polar residues. Composition is skewed to basic and acidic residues over residues 831 to 842 (HYGRGGRYEEYQ), 920 to 948 (SGDH…RPDR), and 981 to 992 (GRFERGEGQSRY).

This Pan troglodytes (Chimpanzee) protein is RNA-binding motif protein, X-linked-like-3 (RBMXL3).